Consider the following 520-residue polypeptide: GMP synthase [glutamine-hydrolyzing] (520 aa).

In terms of domain architecture, Glutamine amidotransferase type-1 spans Ser9–Asp202. The active-site Nucleophile is Cys86. Catalysis depends on residues His176 and Glu178. One can recognise a GMPS ATP-PPase domain in the interval Trp203 to Arg395. An ATP-binding site is contributed by Ser230–Ser236.

Homodimer.

The enzyme catalyses XMP + L-glutamine + ATP + H2O = GMP + L-glutamate + AMP + diphosphate + 2 H(+). It functions in the pathway purine metabolism; GMP biosynthesis; GMP from XMP (L-Gln route): step 1/1. In terms of biological role, catalyzes the synthesis of GMP from XMP. The sequence is that of GMP synthase [glutamine-hydrolyzing] from Rhizobium etli (strain CIAT 652).